Reading from the N-terminus, the 62-residue chain is UPF0337 protein gsr0040 (62 aa).

Basic and acidic residues-rich tracts occupy residues 1-15 (MGID…KDVQ) and 27-62 (DDPK…IDNV). The interval 1-62 (MGIDKRAEAT…DQAHRTIDNV (62 aa)) is disordered.

The protein belongs to the UPF0337 (CsbD) family.

The chain is UPF0337 protein gsr0040 from Gloeobacter violaceus (strain ATCC 29082 / PCC 7421).